We begin with the raw amino-acid sequence, 492 residues long: Trehalose-6-phosphate synthase (492 aa).

Arg-25 is a binding site for D-glucose 6-phosphate. 45-46 contacts UDP-alpha-D-glucose; that stretch reads GG. D-glucose 6-phosphate contacts are provided by Tyr-101 and Asp-155. UDP-alpha-D-glucose is bound by residues Arg-297 and Lys-302. Arg-335 is a binding site for D-glucose 6-phosphate. Position 400 to 404 (400 to 404) interacts with UDP-alpha-D-glucose; that stretch reads LVAKE.

Belongs to the glycosyltransferase 20 family. In terms of assembly, homotetramer.

The catalysed reaction is ADP-alpha-D-glucose + D-glucose 6-phosphate = alpha,alpha-trehalose 6-phosphate + ADP + H(+). The enzyme catalyses CDP-alpha-D-glucose + D-glucose 6-phosphate = alpha,alpha-trehalose 6-phosphate + CDP + H(+). It catalyses the reaction GDP-alpha-D-glucose + D-glucose 6-phosphate = alpha,alpha-trehalose 6-phosphate + GDP + H(+). It carries out the reaction TDP-alpha-D-glucose + D-glucose 6-phosphate = 5-methyl-UDP + alpha,alpha-trehalose 6-phosphate + H(+). The catalysed reaction is D-glucose 6-phosphate + UDP-alpha-D-glucose = alpha,alpha-trehalose 6-phosphate + UDP + H(+). It participates in glycan biosynthesis; trehalose biosynthesis. In terms of biological role, probably involved in the osmoprotection via the biosynthesis of trehalose and in the production of glycogen and alpha-glucan via the TreS-Pep2 branch involved in the biosynthesis of maltose-1-phosphate (M1P). Catalyzes the transfer of glucose from UDP-glucose (UDP-Glc) to D-glucose 6-phosphate (Glc-6-P) to form trehalose-6-phosphate. Probably also able to use ADP-Glc, CDP-Glc, GDP-Glc and TDP-Glc as glucosyl donors. In Mycobacterium avium (strain 104), this protein is Trehalose-6-phosphate synthase.